A 244-amino-acid polypeptide reads, in one-letter code: Triosephosphate isomerase (244 aa).

Residue 9–11 (NWK) coordinates substrate. Residue His93 is the Electrophile of the active site. Residue Glu161 is the Proton acceptor of the active site. Substrate contacts are provided by residues Gly167, Ser206, and 227–228 (GG).

The protein belongs to the triosephosphate isomerase family. As to quaternary structure, homodimer.

It is found in the cytoplasm. It catalyses the reaction D-glyceraldehyde 3-phosphate = dihydroxyacetone phosphate. It functions in the pathway carbohydrate biosynthesis; gluconeogenesis. It participates in carbohydrate degradation; glycolysis; D-glyceraldehyde 3-phosphate from glycerone phosphate: step 1/1. In terms of biological role, involved in the gluconeogenesis. Catalyzes stereospecifically the conversion of dihydroxyacetone phosphate (DHAP) to D-glyceraldehyde-3-phosphate (G3P). This chain is Triosephosphate isomerase, found in Deinococcus geothermalis (strain DSM 11300 / CIP 105573 / AG-3a).